Reading from the N-terminus, the 804-residue chain is Endoplasmin (804 aa).

Residues 1 to 21 (MRALWVLGLCCVLLTFGSVRA) form the signal peptide. Residues 42 to 44 (SRT) carry the SRT pseudosubstrate motif motif. Asn62 carries an N-linked (GlcNAc...) asparagine glycan. Position 64 is a phosphoserine (Ser64). The N-linked (GlcNAc...) asparagine glycan is linked to Asn107. Residues Asn107, Asp149, and Asn162 each contribute to the ATP site. Lys168 is subject to N6-(2-hydroxyisobutyryl)lysine. Residue Ser172 is modified to Phosphoserine. Position 199 (Phe199) interacts with ATP. A glycan (N-linked (GlcNAc...) asparagine) is linked at Asn217. Residues 288–323 (TVEEPMEEEEAAKEEKEESDDEAAVEEEEEEKKPKT) are disordered. The segment covering 289 to 317 (VEEPMEEEEAAKEEKEESDDEAAVEEEEE) has biased composition (acidic residues). Residues Ser306 and Ser403 each carry the phosphoserine modification. Lys404 carries the post-translational modification N6-succinyllysine. Asn445 is a glycosylation site (N-linked (GlcNAc...) asparagine). Ser447 is subject to Phosphoserine. N6-acetyllysine is present on Lys479. N-linked (GlcNAc...) asparagine glycosylation is found at Asn481 and Asn502. The residue at position 633 (Lys633) is an N6-succinyllysine. The tract at residues 750 to 804 (DPDAKVEEEPEEEPEETTEDTTEDTEQDDDEEMDAGADEEEQETSETSTAEKDEL) is disordered. Positions 757–793 (EEPEEEPEETTEDTTEDTEQDDDEEMDAGADEEEQET) are enriched in acidic residues. The short motif at 801-804 (KDEL) is the Prevents secretion from ER element.

The protein belongs to the heat shock protein 90 family. In terms of assembly, homodimer; disulfide-linked. Component of an EIF2 complex at least composed of CELF1/CUGBP1, CALR, CALR3, EIF2S1, EIF2S2, HSP90B1 and HSPA5. Part of a large chaperone multiprotein complex comprising DNAJB11, HSP90B1, HSPA5, HYOU, PDIA2, PDIA4, PDIA6, PPIB, SDF2L1, UGGT1 and very small amounts of ERP29, but not, or at very low levels, CALR nor CANX. Interacts with AIMP1; regulates its retention in the endoplasmic reticulum. Hyperglycosylated form interacts with OS9; promoting its degradation by the endoplasmic reticulum associated degradation (ERAD). Interacts with CNPY3. This interaction is disrupted in the presence of ATP. Interacts with TLR4 and TLR9, but not with TLR3. Interacts with MZB1 in a calcium-dependent manner. Interacts with METTL23. Interacts with IL1B; the interaction facilitates cargo translocation into the ERGIC. Interacts with EIF2AK3. In terms of processing, phosphorylated by CK2. N-glycosylated cotranslationally at Asn-217 by STT3A-containing OST-A complex: this glycosylation is constitutive. In response to various stress, 5 additional facultative sites (Asn-62, Asn-107, Asn-445, Asn-481 and Asn-502) can be glycosylated post-translationally by STT3B-containing OST-B complex, leading to a hyperglycosylated form that is degraded by the ER-associated degradation (ERAD) pathway. In normal conditions, the OST-A complex together with CCDC134 prevent glycosylation at facultative sites during protein folding, thereby preventing hyperglycosylation. Mechanistically, nascent HSP90B1 is tethered during translation to a specialized CCDC134-containing translocon that forms a microenvironment for its folding, in which STT3A associates with the SRT pseudosubstrate motif, and prevents access to facultative glycosylation sites until folding is completed, rendering its facultative sites inaccessible to the OST-B complex.

It is found in the endoplasmic reticulum lumen. The protein localises to the sarcoplasmic reticulum lumen. It localises to the melanosome. It catalyses the reaction ATP + H2O = ADP + phosphate + H(+). Its function is as follows. ATP-dependent chaperone involved in the processing of proteins in the endoplasmic reticulum, regulating their transport. Together with MESD, acts as a modulator of the Wnt pathway by promoting the folding of LRP6, a coreceptor of the canonical Wnt pathway. When associated with CNPY3, required for proper folding of Toll-like receptors. Promotes folding and trafficking of TLR4 to the cell surface. May participate in the unfolding of cytosolic leaderless cargos (lacking the secretion signal sequence) such as the interleukin 1/IL-1 to facilitate their translocation into the ERGIC (endoplasmic reticulum-Golgi intermediate compartment) and secretion; the translocation process is mediated by the cargo receptor TMED10. This Sus scrofa (Pig) protein is Endoplasmin (HSP90B1).